Reading from the N-terminus, the 429-residue chain is Polypyrimidine tract-binding protein homolog 2 (429 aa).

An N-acetylserine modification is found at S2. RRM domains follow at residues 18–96, 110–197, and 243–323; these read KVLH…YSNR, GNVL…YSAH, and SNVL…YSRH. Positions 331-429 are disordered; the sequence is NNDRSRDYTM…QHYGGPGPMH (99 aa). Positions 367–381 are enriched in low complexity; sequence GGSHHQQQQQPQGGW. Over residues 382–397 the composition is skewed to gly residues; it reads VQPGGQGSMGMGGGGH.

The protein resides in the nucleus. Functionally, plays a role in pre-mRNA splicing. Binds to the polypyrimidine tract of introns. May promote the binding of U2 snRNP to pre-mRNA. This is Polypyrimidine tract-binding protein homolog 2 from Arabidopsis thaliana (Mouse-ear cress).